The sequence spans 112 residues: Mu-ctenitoxin-Pn1a (112 aa).

Residues 1–19 (MKLLGIFLVASFAFVLSFG) form the signal peptide. The propeptide occupies 20-33 (EEMIEGENPLEDQR). Intrachain disulfides connect Cys39–Cys56, Cys46–Cys62, Cys53–Cys85, Cys55–Cys73, Cys64–Cys71, Cys91–Cys106, and Cys102–Cys110. At Gly111 the chain carries Glycine amide.

It belongs to the neurotoxin 04 (omega-agtx) family. 02 (Tx1) subfamily. Post-translationally, contains 7 disulfide bonds. In terms of tissue distribution, expressed by the venom gland.

It localises to the secreted. In terms of biological role, reversible inhibitor of neuronal sodium channels (Nav1.2/ SCN2A) that binds in proximity to site 1 and displays increasing affinity as the membrane potential is depolarized. Induces excitatory symptoms and spastic paralysis in mice. This Phoneutria nigriventer (Brazilian armed spider) protein is Mu-ctenitoxin-Pn1a.